We begin with the raw amino-acid sequence, 215 residues long: Negative modulator of initiation of replication (215 aa).

The tract at residues 71-93 is disordered; it reads AETPKPSSEQEIRTPARKQSTQS. An interaction with DNA region spans residues 181–187; that stretch reads NTNSGRK.

The protein belongs to the SeqA family. As to quaternary structure, homodimer. Polymerizes to form helical filaments.

The protein resides in the cytoplasm. In terms of biological role, negative regulator of replication initiation, which contributes to regulation of DNA replication and ensures that replication initiation occurs exactly once per chromosome per cell cycle. Binds to pairs of hemimethylated GATC sequences in the oriC region, thus preventing assembly of replication proteins and re-initiation at newly replicated origins. Repression is relieved when the region becomes fully methylated. The polypeptide is Negative modulator of initiation of replication (Mannheimia succiniciproducens (strain KCTC 0769BP / MBEL55E)).